We begin with the raw amino-acid sequence, 108 residues long: UPF0060 membrane protein SAB2216c (108 aa).

Helical transmembrane passes span 5–25 (IFIFILAGLCEIGGGYLIWLW), 31–51 (CSLVGLIGGAILMLYGVIATF), 60–80 (VYAAYGGVFIIMSLIFAMVVD), and 86–106 (KYDVIGAIICIVGVLVMLLPS).

This sequence belongs to the UPF0060 family.

It localises to the cell membrane. This chain is UPF0060 membrane protein SAB2216c, found in Staphylococcus aureus (strain bovine RF122 / ET3-1).